Reading from the N-terminus, the 110-residue chain is V-type proton ATPase subunit G 1 (110 aa).

This sequence belongs to the V-ATPase G subunit family. V-ATPase is a heteromultimeric enzyme composed of a peripheral catalytic V1 complex (components A to H) attached to an integral membrane V0 proton pore complex (components: a, c, c', c'' and d).

In terms of biological role, catalytic subunit of the peripheral V1 complex of vacuolar ATPase (V-ATPase). V-ATPase is responsible for acidifying a variety of intracellular compartments in eukaryotic cells. The protein is V-type proton ATPase subunit G 1 (VATG1) of Nicotiana tabacum (Common tobacco).